The following is a 410-amino-acid chain: Zinc transporter ttm-1 (410 aa).

Composition is skewed to low complexity over residues 1-13 (MTISMISPSSIRL) and 35-46 (SVSSSDSGVSAD). Residues 1–94 (MTISMISPSS…GAHKHSHDEK (94 aa)) form a disordered region. At 1–103 (MTISMISPSS…KYQKGRRAEK (103 aa)) the chain is on the cytoplasmic side. The segment covering 50–69 (HHHHGHGHGHSHGGHGHSHT) has biased composition (basic residues). Residues 104 to 124 (VLWAVAALSAVFIAAEFVGGF) traverse the membrane as a helical segment. The Extracellular segment spans residues 125–129 (WAQSL). Residues 130–150 (AIMTDAGHMLSDLLSFIISIF) form a helical membrane-spanning segment. Residues 151–171 (AIRCARLPASKRLSFGYERAE) are Cytoplasmic-facing. Residues 172 to 192 (VLGALTSVIILWVLTTVLVVV) traverse the membrane as a helical segment. Topologically, residues 193 to 208 (AIQRIVNNEHEVDADV) are extracellular. The chain crosses the membrane as a helical span at residues 209-229 (MLITAGVGVLFNIVMGLVLHF). Residues 230-258 (GTGGHGHTHGGHSSHGHAHDGKNVNVRAA) lie on the Cytoplasmic side of the membrane. A helical membrane pass occupies residues 259–279 (LIHVIGDLVQSIGVLIAALII). Arg-280 is a topological domain (extracellular). The helical transmembrane segment at 281–301 (FTGWTLADPICTFLFSIIVLF) threads the bilayer. At 302–410 (TTVTVMRDIF…CDTCQQQETA (109 aa)) the chain is on the cytoplasmic side.

It belongs to the cation diffusion facilitator (CDF) transporter (TC 2.A.4) family. SLC30A subfamily. As to expression, isoform a: Expressed in the hypodermis and the intestine. Isoform b: Expressed in the intestine, head neurons, seam cells, hypodermis, and the vulva.

Its subcellular location is the cytoplasmic vesicle membrane. It localises to the apical cell membrane. In terms of biological role, promotes excretion of zinc from intestinal cells into the intestinal lumen in response to increased dietary zinc. Involved in cadmium resistance, possibly by promoting its transport from cells. Involved in resistance to B.thuringiensis pore-forming toxin Cry5B downstream of the sek-1 and pmk-1 MAPK kinase pathway. The sequence is that of Zinc transporter ttm-1 from Caenorhabditis elegans.